The chain runs to 280 residues: Urease accessory protein UreD 1 (280 aa).

The protein belongs to the UreD family. UreD, UreF and UreG form a complex that acts as a GTP-hydrolysis-dependent molecular chaperone, activating the urease apoprotein by helping to assemble the nickel containing metallocenter of UreC. The UreE protein probably delivers the nickel.

The protein resides in the cytoplasm. In terms of biological role, required for maturation of urease via the functional incorporation of the urease nickel metallocenter. In Bradyrhizobium sp. (strain BTAi1 / ATCC BAA-1182), this protein is Urease accessory protein UreD 1.